A 197-amino-acid polypeptide reads, in one-letter code: Nucleoid occlusion factor SlmA (197 aa).

An HTH tetR-type domain is found at 7 to 67 (INRREHILQC…GLIDFIEESL (61 aa)). A DNA-binding region (H-T-H motif) is located at residues 30–49 (TTAKLAAEVGVSEAALYRHF).

It belongs to the nucleoid occlusion factor SlmA family. In terms of assembly, homodimer. Interacts with FtsZ.

The protein resides in the cytoplasm. Its subcellular location is the nucleoid. Functionally, required for nucleoid occlusion (NO) phenomenon, which prevents Z-ring formation and cell division over the nucleoid. Acts as a DNA-associated cell division inhibitor that binds simultaneously chromosomal DNA and FtsZ, and disrupts the assembly of FtsZ polymers. SlmA-DNA-binding sequences (SBS) are dispersed on non-Ter regions of the chromosome, preventing FtsZ polymerization at these regions. The sequence is that of Nucleoid occlusion factor SlmA from Shewanella sediminis (strain HAW-EB3).